Here is a 503-residue protein sequence, read N- to C-terminus: UPF0522 protein C (503 aa).

The N-terminal stretch at 1 to 18 is a signal peptide; sequence MKLFILIILSICLALVNS. N-linked (GlcNAc...) asparagine glycosylation is found at N330, N337, and N370.

The protein belongs to the UPF0522 family.

It is found in the secreted. The chain is UPF0522 protein C from Dictyostelium discoideum (Social amoeba).